A 126-amino-acid chain; its full sequence is MPEPAKSAPAAKKGSKKAVSKVQKKDGKKRRKSRKESYAIYVYKVLKQVHPDTGISSKAMSIMNSFVNDIFERIAGEASRLAHYNKRSTITSREIQTAVRLLLPGELAKHAVSEGTKAVTKYTSAK.

Positions 1-12 are enriched in low complexity; it reads MPEPAKSAPAAK. A disordered region spans residues 1 to 35; that stretch reads MPEPAKSAPAAKKGSKKAVSKVQKKDGKKRRKSRK. Lysine 6 and lysine 13 each carry N6-acetyllysine. Serine 15 carries the post-translational modification Phosphoserine. N6-acetyllysine occurs at positions 16 and 21. Serine 113 is a glycosylation site (O-linked (GlcNAc) serine). Lysine 121 participates in a covalent cross-link: Glycyl lysine isopeptide (Lys-Gly) (interchain with G-Cter in ubiquitin).

Belongs to the histone H2B family. The nucleosome is a histone octamer containing two molecules each of H2A, H2B, H3 and H4 assembled in one H3-H4 heterotetramer and two H2A-H2B heterodimers. The octamer wraps approximately 147 bp of DNA. Monoubiquitination of Lys-121 by BRE1 gives a specific tag for epigenetic transcriptional activation and is also prerequisite for histone H3 'Lys-4' and 'Lys-79' methylation. Post-translationally, phosphorylated on Ser-15 during apoptosis; which facilitates apoptotic chromatin condensation. In terms of processing, glcNAcylation at Ser-113 promotes monoubiquitination of Lys-121. It fluctuates in response to extracellular glucose, and associates with transcribed genes. As to expression, expressed by the skin granular glands.

It localises to the nucleus. The protein resides in the secreted. It is found in the chromosome. Its function is as follows. Core component of nucleosome. Nucleosomes wrap and compact DNA into chromatin, limiting DNA accessibility to the cellular machineries which require DNA as a template. Histones thereby play a central role in transcription regulation, DNA repair, DNA replication and chromosomal stability. DNA accessibility is regulated via a complex set of post-translational modifications of histones, also called histone code, and nucleosome remodeling. Functionally, has antibacterial activity against the Gram-negative bacteria E.coli and the Gram-positive bacteria S.aureus. This is Histone H2B from Zhangixalus schlegelii (Japanese gliding frog).